The sequence spans 172 residues: Shikimate kinase (172 aa).

ATP is bound at residue 12–17; it reads GSGKTS. Thr16 is a binding site for Mg(2+). Substrate-binding residues include Asp34, Arg58, and Gly81. Arg122 lines the ATP pocket. Arg139 contributes to the substrate binding site.

Belongs to the shikimate kinase family. Monomer. Mg(2+) serves as cofactor.

It localises to the cytoplasm. It catalyses the reaction shikimate + ATP = 3-phosphoshikimate + ADP + H(+). Its pathway is metabolic intermediate biosynthesis; chorismate biosynthesis; chorismate from D-erythrose 4-phosphate and phosphoenolpyruvate: step 5/7. In terms of biological role, catalyzes the specific phosphorylation of the 3-hydroxyl group of shikimic acid using ATP as a cosubstrate. This Dictyoglomus turgidum (strain DSM 6724 / Z-1310) protein is Shikimate kinase.